A 199-amino-acid chain; its full sequence is dITP/XTP pyrophosphatase (199 aa).

A substrate-binding site is contributed by 7 to 12 (TGNKGK). The active-site Proton acceptor is Asp-71. A Mg(2+)-binding site is contributed by Asp-71. Substrate contacts are provided by residues Ala-72, 154–157 (FGYD), Lys-177, and 182–183 (HR).

This sequence belongs to the HAM1 NTPase family. In terms of assembly, homodimer. Mg(2+) serves as cofactor.

The catalysed reaction is XTP + H2O = XMP + diphosphate + H(+). It carries out the reaction dITP + H2O = dIMP + diphosphate + H(+). The enzyme catalyses ITP + H2O = IMP + diphosphate + H(+). Functionally, pyrophosphatase that catalyzes the hydrolysis of nucleoside triphosphates to their monophosphate derivatives, with a high preference for the non-canonical purine nucleotides XTP (xanthosine triphosphate), dITP (deoxyinosine triphosphate) and ITP. Seems to function as a house-cleaning enzyme that removes non-canonical purine nucleotides from the nucleotide pool, thus preventing their incorporation into DNA/RNA and avoiding chromosomal lesions. The polypeptide is dITP/XTP pyrophosphatase (Bdellovibrio bacteriovorus (strain ATCC 15356 / DSM 50701 / NCIMB 9529 / HD100)).